Here is a 467-residue protein sequence, read N- to C-terminus: Pentatricopeptide repeat-containing protein At1g77170, mitochondrial (467 aa).

Residues 1-30 (MFFSGLISKLHVHGTKRTNHFTIFHRLNHF) constitute a mitochondrion transit peptide. 9 PPR repeats span residues 81-115 (IAFLWNNIMRSYIRHESPLDAIQVYLGMVRSTVLP), 116-150 (DRYSLPIVIKAAVQIHDFTLGKELHSVAVRLGFVG), 151-181 (DEFCESGFITLYCKAGEFENARKVFDENPER), 182-216 (KLGSWNAIIGGLNHAGRANEAVEMFVDMKRSGLEP), 217-251 (DDFTMVSVTASCGGLGDLSLAFQLHKCVLQAKTEE), 254-284 (DIMMLNSLIDMYGKCGRMDLASHIFEEMRQR), 285-319 (NVVSWSSMIVGYAANGNTLEALECFRQMREFGVRP), 320-350 (NKITFVGVLSACVHGGLVEEGKTYFAMMKSE), and 356-386 (GLSHYGCIVDLLSRDGQLKEAKKVVEEMPMK). A type E motif region spans residues 391–466 (VWGCLMGGCE…IPAYSYASTT (76 aa)).

This sequence belongs to the PPR family. PCMP-E subfamily.

The protein resides in the mitochondrion. In Arabidopsis thaliana (Mouse-ear cress), this protein is Pentatricopeptide repeat-containing protein At1g77170, mitochondrial (PCMP-E21).